Here is a 181-residue protein sequence, read N- to C-terminus: Der GTPase-activating protein YihI (181 aa).

Disordered regions lie at residues 1 to 75 and 145 to 181; these read MSRK…KKIP and EPEAEEEFEDEAPVRKSRSDDDLLADFEDFDMDDYKG. Residues 32–43 show a composition bias toward basic residues; that stretch reads RLRKKDKKRKGL. The span at 146–155 shows a compositional bias: acidic residues; that stretch reads PEAEEEFEDE. Over residues 156 to 165 the composition is skewed to basic and acidic residues; it reads APVRKSRSDD. Residues 166–181 show a composition bias toward acidic residues; the sequence is DLLADFEDFDMDDYKG.

This sequence belongs to the YihI family. In terms of assembly, interacts with Der.

Functionally, a GTPase-activating protein (GAP) that modifies Der/EngA GTPase function. May play a role in ribosome biogenesis. The sequence is that of Der GTPase-activating protein YihI from Vibrio vulnificus (strain YJ016).